The chain runs to 190 residues: MLNFNIFLVGPMGSGKTTIGRYLARITGKNFYDSDREIESRTGVSIPVIFEIEGESGFRQRECKIIAELVQLNNIVLATGGGAVLAAENRRELSQRGIVVYLYAPPKQLYRRTSHDNNRPLLRTGNPLERLKCLLKERDPLYREVADVIIKTGKQPVKAVANEVLRQLRQYKGGAPQRKSFVHVKSNKGA.

Position 13–18 (13–18 (GSGKTT)) interacts with ATP. A Mg(2+)-binding site is contributed by threonine 17. Substrate contacts are provided by aspartate 35, arginine 59, and glycine 81. An ATP-binding site is contributed by arginine 119. Arginine 138 contributes to the substrate binding site. Glutamine 155 contacts ATP.

This sequence belongs to the shikimate kinase family. As to quaternary structure, monomer. Requires Mg(2+) as cofactor.

It localises to the cytoplasm. The catalysed reaction is shikimate + ATP = 3-phosphoshikimate + ADP + H(+). It functions in the pathway metabolic intermediate biosynthesis; chorismate biosynthesis; chorismate from D-erythrose 4-phosphate and phosphoenolpyruvate: step 5/7. Functionally, catalyzes the specific phosphorylation of the 3-hydroxyl group of shikimic acid using ATP as a cosubstrate. The protein is Shikimate kinase of Nitrosococcus oceani (strain ATCC 19707 / BCRC 17464 / JCM 30415 / NCIMB 11848 / C-107).